Consider the following 200-residue polypeptide: Interferon lambda-1 (200 aa).

The N-terminal stretch at 1–19 (MAAAWTVVLVTLVLGLAVA) is a signal peptide. Residue N65 is glycosylated (N-linked (GlcNAc...) asparagine). Cysteines 68 and 164 form a disulfide.

This sequence belongs to the lambda interferon family.

The protein localises to the secreted. Functionally, cytokine with antiviral, antitumour and immunomodulatory activities. Plays a critical role in the antiviral host defense, predominantly in the epithelial tissues. Acts as a ligand for the heterodimeric class II cytokine receptor composed of IL10RB and IFNLR1, and receptor engagement leads to the activation of the JAK/STAT signaling pathway resulting in the expression of IFN-stimulated genes (ISG), which mediate the antiviral state. Has a restricted receptor distribution and therefore restricted targets: is primarily active in epithelial cells and this cell type-selective action is because of the epithelial cell-specific expression of its receptor IFNLR1. Exerts an immunomodulatory effect by up-regulating MHC class I antigen expression. In Homo sapiens (Human), this protein is Interferon lambda-1 (IFNL1).